The primary structure comprises 489 residues: 3-octaprenyl-4-hydroxybenzoate carboxy-lyase (489 aa).

Asparagine 172 is a Mn(2+) binding site. Residues 175-177 (VYR), 189-191 (RWL), and 194-195 (RG) contribute to the prenylated FMN site. Residue glutamate 240 coordinates Mn(2+). The Proton donor role is filled by aspartate 288.

This sequence belongs to the UbiD family. In terms of assembly, homohexamer. The cofactor is prenylated FMN. It depends on Mn(2+) as a cofactor.

The protein localises to the cell membrane. It catalyses the reaction a 4-hydroxy-3-(all-trans-polyprenyl)benzoate + H(+) = a 2-(all-trans-polyprenyl)phenol + CO2. Its pathway is cofactor biosynthesis; ubiquinone biosynthesis. Functionally, catalyzes the decarboxylation of 3-octaprenyl-4-hydroxy benzoate to 2-octaprenylphenol, an intermediate step in ubiquinone biosynthesis. This Wigglesworthia glossinidia brevipalpis protein is 3-octaprenyl-4-hydroxybenzoate carboxy-lyase.